The chain runs to 157 residues: MAPKKEEKPASQAAEAPEVKAEAKPKAVKAPKKKEKKAPAKKVAKEPSAGGEDGDKKSKKKAKVAKSETYKLYIYKVLKQVHPDTGISSKAMSIMNSFINDIFEKVATEASKLSRYNKKPTVTSREIQTAVRLVLPGELAKHAVSEGTKAVTKFTSA.

The segment at 1-64 (MAPKKEEKPA…DKKSKKKAKV (64 aa)) is disordered. Residues 26–42 (KAVKAPKKKEKKAPAKK) show a composition bias toward basic residues. K153 is covalently cross-linked (Glycyl lysine isopeptide (Lys-Gly) (interchain with G-Cter in ubiquitin)).

The protein belongs to the histone H2B family. As to quaternary structure, the nucleosome is a histone octamer containing two molecules each of H2A, H2B, H3 and H4 assembled in one H3-H4 heterotetramer and two H2A-H2B heterodimers. The octamer wraps approximately 147 bp of DNA. Monoubiquitinated to form H2BK143ub1; may give a specific tag for epigenetic transcriptional activation.

It localises to the nucleus. The protein resides in the chromosome. In terms of biological role, core component of nucleosome. Nucleosomes wrap and compact DNA into chromatin, limiting DNA accessibility to the cellular machineries which require DNA as a template. Histones thereby play a central role in transcription regulation, DNA repair, DNA replication and chromosomal stability. DNA accessibility is regulated via a complex set of post-translational modifications of histones, also called histone code, and nucleosome remodeling. This is Histone H2B.3 from Volvox carteri (Green alga).